Reading from the N-terminus, the 475-residue chain is Ribulose bisphosphate carboxylase large chain (475 aa).

Residues 1–2 constitute a propeptide that is removed on maturation; that stretch reads MS. Position 3 is an N-acetylproline (proline 3). Asparagine 123 and threonine 173 together coordinate substrate. Lysine 175 functions as the Proton acceptor in the catalytic mechanism. Lysine 177 serves as a coordination point for substrate. Residues lysine 201, aspartate 203, and glutamate 204 each coordinate Mg(2+). N6-carboxylysine is present on lysine 201. Residue histidine 294 is the Proton acceptor of the active site. Substrate contacts are provided by arginine 295, histidine 327, and serine 379.

It belongs to the RuBisCO large chain family. Type I subfamily. In terms of assembly, heterohexadecamer of 8 large chains and 8 small chains; disulfide-linked. The disulfide link is formed within the large subunit homodimers. Mg(2+) serves as cofactor. The disulfide bond which can form in the large chain dimeric partners within the hexadecamer appears to be associated with oxidative stress and protein turnover.

It is found in the plastid. The protein localises to the chloroplast. It catalyses the reaction 2 (2R)-3-phosphoglycerate + 2 H(+) = D-ribulose 1,5-bisphosphate + CO2 + H2O. The catalysed reaction is D-ribulose 1,5-bisphosphate + O2 = 2-phosphoglycolate + (2R)-3-phosphoglycerate + 2 H(+). Functionally, ruBisCO catalyzes two reactions: the carboxylation of D-ribulose 1,5-bisphosphate, the primary event in carbon dioxide fixation, as well as the oxidative fragmentation of the pentose substrate in the photorespiration process. Both reactions occur simultaneously and in competition at the same active site. In Gnetum parvifolium (Small-leaved jointfir), this protein is Ribulose bisphosphate carboxylase large chain.